The sequence spans 428 residues: Enolase (428 aa).

Q163 serves as a coordination point for (2R)-2-phosphoglycerate. E205 (proton donor) is an active-site residue. Mg(2+) contacts are provided by D242, E286, and D313. K338, R367, S368, and K389 together coordinate (2R)-2-phosphoglycerate. The Proton acceptor role is filled by K338.

This sequence belongs to the enolase family. Mg(2+) serves as cofactor.

The protein localises to the cytoplasm. Its subcellular location is the secreted. The protein resides in the cell surface. It carries out the reaction (2R)-2-phosphoglycerate = phosphoenolpyruvate + H2O. It functions in the pathway carbohydrate degradation; glycolysis; pyruvate from D-glyceraldehyde 3-phosphate: step 4/5. Its function is as follows. Catalyzes the reversible conversion of 2-phosphoglycerate (2-PG) into phosphoenolpyruvate (PEP). It is essential for the degradation of carbohydrates via glycolysis. The polypeptide is Enolase (Lactobacillus acidophilus (strain ATCC 700396 / NCK56 / N2 / NCFM)).